The primary structure comprises 388 residues: Flap endonuclease 1 (388 aa).

Residues 1–104 (MGILGLSKLI…GELAKRAERR (104 aa)) form an N-domain region. D34 is a binding site for Mg(2+). R47 and R70 together coordinate DNA. Positions 86, 158, 160, 179, and 181 each coordinate Mg(2+). The I-domain stretch occupies residues 122 to 253 (EIEKFNRRLV…KRAIELIKTY (132 aa)). E158 serves as a coordination point for DNA. Residues G231 and D233 each coordinate DNA. D233 lines the Mg(2+) pocket. Residues 336-344 (TQVRLDSFF) are interaction with PCNA. Positions 351-388 (PNATAAAKRKAEEIKKSANNKKAKTSGGSGAARGRRPK) are disordered.

Belongs to the XPG/RAD2 endonuclease family. FEN1 subfamily. As to quaternary structure, interacts with PCNA. Three molecules of FEN1 bind to one PCNA trimer with each molecule binding to one PCNA monomer. PCNA stimulates the nuclease activity without altering cleavage specificity. Mg(2+) is required as a cofactor. Phosphorylated. Phosphorylation upon DNA damage induces relocalization to the nuclear plasma.

The protein localises to the nucleus. The protein resides in the nucleolus. It localises to the nucleoplasm. It is found in the mitochondrion. Its function is as follows. Structure-specific nuclease with 5'-flap endonuclease and 5'-3' exonuclease activities involved in DNA replication and repair. During DNA replication, cleaves the 5'-overhanging flap structure that is generated by displacement synthesis when DNA polymerase encounters the 5'-end of a downstream Okazaki fragment. It enters the flap from the 5'-end and then tracks to cleave the flap base, leaving a nick for ligation. Also involved in the long patch base excision repair (LP-BER) pathway, by cleaving within the apurinic/apyrimidinic (AP) site-terminated flap. Acts as a genome stabilization factor that prevents flaps from equilibrating into structures that lead to duplications and deletions. Also possesses 5'-3' exonuclease activity on nicked or gapped double-stranded DNA, and exhibits RNase H activity. Also involved in replication and repair of rDNA and in repairing mitochondrial DNA. The chain is Flap endonuclease 1 from Drosophila mojavensis (Fruit fly).